Reading from the N-terminus, the 282-residue chain is Probable protein phosphatase 2C 10 (282 aa).

Residues 34–281 (KFGYSLVKGK…DDISCIVVRL (248 aa)) enclose the PPM-type phosphatase domain. Positions 71, 72, 233, and 272 each coordinate Mn(2+).

Belongs to the PP2C family. Mg(2+) serves as cofactor. It depends on Mn(2+) as a cofactor.

The enzyme catalyses O-phospho-L-seryl-[protein] + H2O = L-seryl-[protein] + phosphate. It carries out the reaction O-phospho-L-threonyl-[protein] + H2O = L-threonyl-[protein] + phosphate. The polypeptide is Probable protein phosphatase 2C 10 (Arabidopsis thaliana (Mouse-ear cress)).